The primary structure comprises 249 residues: Probable transcriptional regulatory protein Tgr7_2237 (249 aa).

It belongs to the TACO1 family.

The protein localises to the cytoplasm. This Thioalkalivibrio sulfidiphilus (strain HL-EbGR7) protein is Probable transcriptional regulatory protein Tgr7_2237.